A 182-amino-acid polypeptide reads, in one-letter code: Ribosome maturation factor RimM (182 aa).

Positions Glu-103–Phe-182 constitute a PRC barrel domain.

The protein belongs to the RimM family. As to quaternary structure, binds ribosomal protein uS19.

It localises to the cytoplasm. Its function is as follows. An accessory protein needed during the final step in the assembly of 30S ribosomal subunit, possibly for assembly of the head region. Essential for efficient processing of 16S rRNA. May be needed both before and after RbfA during the maturation of 16S rRNA. It has affinity for free ribosomal 30S subunits but not for 70S ribosomes. This chain is Ribosome maturation factor RimM, found in Vibrio parahaemolyticus serotype O3:K6 (strain RIMD 2210633).